The following is a 325-amino-acid chain: Probable tRNA pseudouridine synthase B (325 aa).

D69 (nucleophile) is an active-site residue. The 76-residue stretch at 236–311 (LPKIVIKDSA…IAADIQRVMM (76 aa)) folds into the PUA domain.

This sequence belongs to the pseudouridine synthase TruB family. Type 2 subfamily.

The catalysed reaction is uridine(55) in tRNA = pseudouridine(55) in tRNA. Functionally, could be responsible for synthesis of pseudouridine from uracil-55 in the psi GC loop of transfer RNAs. In Archaeoglobus fulgidus (strain ATCC 49558 / DSM 4304 / JCM 9628 / NBRC 100126 / VC-16), this protein is Probable tRNA pseudouridine synthase B.